A 537-amino-acid chain; its full sequence is Glucocorticoid-induced transcript 1 protein (537 aa).

Disordered stretches follow at residues 1–45 (MSTA…APAA) and 62–254 (LLRG…HGNH). Ser-69, Ser-96, Ser-98, and Ser-99 each carry phosphoserine. The segment covering 69–86 (SPTRPAAAATAAAALGSL) has biased composition (low complexity). The segment covering 97 to 106 (PSSPTPPPAA) has biased composition (pro residues). The residue at position 101 (Thr-101) is a Phosphothreonine. Basic and acidic residues predominate over residues 121–136 (RSPESRRRSSSPERRS). Low complexity predominate over residues 152–168 (IRTSSTIRRTSSLDTIT). Residues Ser-162 and Ser-163 each carry the phosphoserine modification. Residues Thr-166 and Thr-168 each carry the phosphothreonine modification. The segment covering 178–192 (RDPHVHYPSCMRDKA) has biased composition (basic and acidic residues). At Ser-214 the chain carries Phosphoserine. Residues 217-244 (SADQLKEIAKLRQQLQRSKQSSRHSKEK) are a coiled coil. Ser-248 carries the post-translational modification Phosphoserine. Residue Thr-256 is modified to Phosphothreonine. A Phosphoserine modification is found at Ser-293. Residues 309 to 321 (EVSKPLDIPDGRR) are compositionally biased toward basic and acidic residues. The segment at 309–407 (EVSKPLDIPD…KPNNSYMFKR (99 aa)) is disordered. Positions 329 to 346 (RSSSTRSIDTQTPSVQER) are enriched in polar residues. Thr-333 is subject to Phosphothreonine. A Phosphoserine modification is found at Ser-335. A Phosphothreonine modification is found at Thr-340. Low complexity predominate over residues 347 to 359 (SSSCSSHSPCVSP). Residues Ser-384, Ser-388, Ser-396, Ser-402, and Ser-470 each carry the phosphoserine modification. The segment at 495–520 (SLSDDTSTADSLEPSAQQPSQQQQLL) is disordered.

In terms of tissue distribution, predominantly expressed in thymus and testis, especially in CD4+CD8+ cells and at specific stages of spermatogenesis.

The protein is Glucocorticoid-induced transcript 1 protein (Glcci1) of Mus musculus (Mouse).